Here is a 249-residue protein sequence, read N- to C-terminus: T-cell immunoreceptor with Ig and ITIM domains (249 aa).

The N-terminal stretch at 1–28 is a signal peptide; that stretch reads MHGWLLLVWVQGLIQAAFLATAIGATAG. Residues 29 to 127 form the Ig-like V-type domain; the sequence is TIDTKRNISA…GGIYKGRIFL (99 aa). Over 29–148 the chain is Extracellular; sequence TIDTKRNISA…LAQFQTAPLG (120 aa). Positions 35-45 are homodimerization; sequence NISAEEGGSVI. A disulfide bond links Cys-48 and Cys-111. N-linked (GlcNAc...) asparagine glycosylation occurs at Asn-104. The chain crosses the membrane as a helical span at residues 149-169; the sequence is GTMAAVLGLICLMVTGVTVLA. Residues 170–249 lie on the Cytoplasmic side of the membrane; sequence RKDKSIRMHS…ESFIAVSKTG (80 aa). Positions 182 to 222 are disordered; that stretch reads SGLGRTEAEPQEWNLRSLSSPGSPVQTQTAPAGPCGEQAED. Positions 195–211 are enriched in polar residues; sequence NLRSLSSPGSPVQTQTA. An ITIM motif motif is present at residues 234 to 239; sequence LSYRSL.

As to quaternary structure, homodimer in cis; binds with high affinity to PVR, forming a heterotetrameric assembly of two TIGIT and two PVR molecules. Binds with lower affinity to NECTIN2 and NECTIN3. Interacts with GRB2. Interacts with NECTIN4.

The protein resides in the cell membrane. Its function is as follows. Inhibitory receptor that plays a role in the modulation of immune responses. Suppresses T-cell activation by promoting the generation of mature immunoregulatory dendritic cells. Upon binding to its ligands PVR/CD155 or NECTIN2/CD112, which are expressed on antigen-presenting cells, sends inhibitory signals to the T-cell or NK cell. Mechanistically, interaction with ligand leads to phosphorylation of the cytoplasmic tail by Src family tyrosine kinases such as FYN or LCK, allowing subsequent binding to adapter GRB2 and SHIP1/INPP5D. In turn, inhibits PI3K and MAPK signaling cascades. In addition, associates with beta-arrestin-2/ARRB2 to recruit SHIP1/INPP5D that suppresses autoubiquitination of TRAF6 and subsequently inhibits NF-kappa-B signaling pathway. Also acts as a receptor for NECTIN4 to inhibit NK cell cytotoxicity. In Mus musculus (Mouse), this protein is T-cell immunoreceptor with Ig and ITIM domains.